A 399-amino-acid polypeptide reads, in one-letter code: Nicotinate phosphoribosyltransferase (399 aa).

Residue H224 is modified to Phosphohistidine; by autocatalysis.

Belongs to the NAPRTase family. Transiently phosphorylated on a His residue during the reaction cycle. Phosphorylation strongly increases the affinity for substrates and increases the rate of nicotinate D-ribonucleotide production. Dephosphorylation regenerates the low-affinity form of the enzyme, leading to product release.

It carries out the reaction nicotinate + 5-phospho-alpha-D-ribose 1-diphosphate + ATP + H2O = nicotinate beta-D-ribonucleotide + ADP + phosphate + diphosphate. Its pathway is cofactor biosynthesis; NAD(+) biosynthesis; nicotinate D-ribonucleotide from nicotinate: step 1/1. Its function is as follows. Catalyzes the synthesis of beta-nicotinate D-ribonucleotide from nicotinate and 5-phospho-D-ribose 1-phosphate at the expense of ATP. This Ectopseudomonas mendocina (strain ymp) (Pseudomonas mendocina) protein is Nicotinate phosphoribosyltransferase.